The chain runs to 210 residues: Quaternary-amine-specific corrinoid protein (210 aa).

In terms of domain architecture, B12-binding N-terminal spans 1-90; the sequence is MADWKNLTQA…VLGSGDTAVA (90 aa). The region spanning 90–210 is the B12-binding domain; it reads AGTILIGTAH…GVKICQAWVG (121 aa). Residue His103 participates in methylcob(III)alamin binding.

It belongs to the methylamine corrinoid protein family. The proline betaine:THF methyl transfer system is composed of two methyltransferases, MtpB and MtqA, and the corrinoid protein MtqC. The L-carnitine:THF methyl transfer system is composed of two methyltransferases, MtcB and MtqA, and the corrinoid protein MtqC.

In terms of biological role, involved in the degradation of the quaternary amines L-proline betaine and L-carnitine. Component of a corrinoid-dependent methyltransferase system that transfers a methyl group from L-proline betaine or L-carnitine to tetrahydrofolate (THF), forming methyl-THF, a key intermediate in the Wood-Ljungdahl acetogenesis pathway. Acts as a methyl group carrier between MtpB or MtcB, and MtqA. A methyl group from L-proline betaine or L-carnitine is first transferred to the corrinoid prosthetic group of MtqC by MtpB or MtcB, respectively, and then transferred from MtqC to THF by MtqA. The sequence is that of Quaternary-amine-specific corrinoid protein from Eubacterium limosum.